We begin with the raw amino-acid sequence, 770 residues long: MFPQSRHPTPHQAAGQPFKFTIPESLDRIKEEFQFLQAQYHSLKLECEKLASEKTEMQRHYVMYYEMSYGLNIEMHKQTEIAKRLNTICAQVIPFLSQEHQQQVAQAVERAKQVTMAELNAIIGQQQLQAQHLSHGHGPPVPLTPHPSGLQPPGIPPLGGSAGLLALSSALSGQSHLAIKDDKKHHDAEHHRDREPGTSNSLLVPDSLRGTDKRRNGPEFSNDIKKRKVDDKDSSHYDSDGDKSDDNLVVDVSNEDPSSPRASPAHSPRENGIDKNRLLKKDASSSPASTASSASSTSLKSKEMSLHEKASTPVLKSSTPTPRSDMPTPGTSATPGLRPGLGKPPAIDPLVNQAAAGLRTPLAVPGPYPAPFGMVPHAGMNGELTSPGAAYASLHNMSPQMSAAAAAAAVVAYGRSPMVGFDPPPHMRVPTIPPNLAGIPGGKPAYSFHVTADGQMQPVPFPPDALIGPGIPRHARQINTLNHGEVVCAVTISNPTRHVYTGGKGCVKVWDISHPGNKSPVSQLDCLNRDNYIRSCKLLPDGCTLIVGGEASTLSIWDLAAPTPRIKAELTSSAPACYALAISPDSKVCFSCCSDGNIAVWDLHNQTLVRQFQGHTDGASCIDISNDGTKLWTGGLDNTVRSWDLREGRQLQQHDFTSQIFSLGYCPTGEWLAVGMESSNVEVLHVNKPDKYQLHLHESCVLSLKFAYCGKWFVSTGKDNLLNAWRTPYGASIFQSKESSSVLSCDISVDDKYIVTGSGDKKATVYEVIY.

The tract at residues 1–131 (MFPQSRHPTP…IIGQQQLQAQ (131 aa)) is q domain. Disordered regions lie at residues 128 to 157 (LQAQ…GIPP) and 176 to 348 (HLAI…PAID). Residues 132–199 (HLSHGHGPPV…HHRDREPGTS (68 aa)) form a GP domain region. Basic and acidic residues-rich tracts occupy residues 178 to 196 (AIKD…DREP) and 209 to 246 (RGTD…KSDD). The interval 200-268 (NSLLVPDSLR…SPRASPAHSP (69 aa)) is ccN domain. Residues 225–228 (KKRK) carry the Nuclear localization signal motif. Residue serine 239 is modified to Phosphoserine. A compositionally biased stretch (low complexity) spans 257–266 (PSSPRASPAH). A phosphoserine; by CDK1 mark is found at serine 259, serine 263, and serine 267. Residues 267–283 (SPRENGIDKNRLLKKDA) show a composition bias toward basic and acidic residues. An SP domain region spans residues 269 to 450 (RENGIDKNRL…GGKPAYSFHV (182 aa)). Residues 284–298 (SSSPASTASSASSTS) are compositionally biased toward low complexity. Phosphoserine is present on serine 286. A compositionally biased stretch (basic and acidic residues) spans 300 to 310 (KSKEMSLHEKA). WD repeat units follow at residues 470–501 (GIPR…HVYT), 528–558 (NRDN…SIWD), 572–602 (SSAP…AVWD), 614–644 (GHTD…RSWD), 696–726 (LHES…NAWR), and 737–767 (KESS…TVYE).

It belongs to the WD repeat Groucho/TLE family. As to quaternary structure, homooligomer and heterooligomer with other family members. Binds RUNX1, RUNX3, FOXA2, KDM6A, UTY, histone H3, HESX1, ESRRG and the NF-kappa-B subunit RELA. Interacts with HES1 (via WRPW motif). Binds TCF7, LEF1, TCF7L1 and TCF7L2. Interacts with SIX3. Interacts with EFNB1. Interacts with TLE4. Interacts with FOXG1/BF-1; the interaction is inhibited by TLE6/GRG6. Phosphorylated, probably by CDK1. The degree of phosphorylation varies throughout the cell cycle, and is highest at the G2/M transition. Becomes hyperphosphorylated in response to cell differentiation and interaction with HES1 or RUNX1. Post-translationally, ubiquitinated by XIAP/BIRC4. As to expression, in all tissues examined, mostly in brain, liver and muscle.

The protein resides in the nucleus. Functionally, transcriptional corepressor that binds to a number of transcription factors. Inhibits NF-kappa-B-regulated gene expression. Inhibits the transcriptional activation mediated by FOXA2, and by CTNNB1 and TCF family members in Wnt signaling. Enhances FOXG1/BF-1- and HES1-mediated transcriptional repression. The effects of full-length TLE family members may be modulated by association with dominant-negative AES. Unusual function as coactivator for ESRRG. The polypeptide is Transducin-like enhancer protein 1 (TLE1) (Homo sapiens (Human)).